The following is a 235-amino-acid chain: Large ribosomal subunit protein uL1 (235 aa).

It belongs to the universal ribosomal protein uL1 family. As to quaternary structure, part of the 50S ribosomal subunit.

Its function is as follows. Binds directly to 23S rRNA. The L1 stalk is quite mobile in the ribosome, and is involved in E site tRNA release. In terms of biological role, protein L1 is also a translational repressor protein, it controls the translation of the L11 operon by binding to its mRNA. In Thermobifida fusca (strain YX), this protein is Large ribosomal subunit protein uL1.